Reading from the N-terminus, the 297-residue chain is Pantothenate synthetase (297 aa).

30–37 (MGYLHAGH) is a binding site for ATP. The active-site Proton donor is His-37. Gln-61 contacts (R)-pantoate. Gln-61 provides a ligand contact to beta-alanine. 147–150 (GEKD) contributes to the ATP binding site. Residue Gln-153 coordinates (R)-pantoate. ATP contacts are provided by residues Val-176 and 184–187 (LSSR).

Belongs to the pantothenate synthetase family. As to quaternary structure, homodimer.

The protein resides in the cytoplasm. The catalysed reaction is (R)-pantoate + beta-alanine + ATP = (R)-pantothenate + AMP + diphosphate + H(+). The protein operates within cofactor biosynthesis; (R)-pantothenate biosynthesis; (R)-pantothenate from (R)-pantoate and beta-alanine: step 1/1. Functionally, catalyzes the condensation of pantoate with beta-alanine in an ATP-dependent reaction via a pantoyl-adenylate intermediate. This is Pantothenate synthetase from Rhizobium etli (strain ATCC 51251 / DSM 11541 / JCM 21823 / NBRC 15573 / CFN 42).